Here is a 1642-residue protein sequence, read N- to C-terminus: Cortactin-binding protein 2 (1642 aa).

Disordered regions lie at residues 1–27 (MATD…AEAA), 203–222 (KKKT…RSTE), 366–433 (IGAS…HPGL), 446–471 (GSNA…SPTS), and 491–611 (RFTS…PSID). A coiled-coil region spans residues 119-276 (RKMQERMSTQ…EQLKRGTDSK (158 aa)). Residues 385 to 394 (GPSTGSTADL) are compositionally biased toward polar residues. Residues 395 to 407 (TSSPTPVPSTVSP) show a composition bias toward low complexity. Asymmetric dimethylarginine is present on arginine 491. The span at 497-506 (AGAPPRPGAP) shows a compositional bias: pro residues. Over residues 576–586 (TVASPPSTLPQ) the composition is skewed to polar residues. ANK repeat units follow at residues 702–732 (GRPT…DINY), 736–765 (DGHS…QVNA), 769–798 (NGFT…NINH), 802–831 (GGQT…DRSV), 835–864 (DGWT…PAHG), and 904–934 (EGWT…EPER). The interval 1441 to 1469 (SGAWRKVSTSPRKKSGRFSSPTWNKPDLS) is disordered. A Phosphoserine modification is found at serine 1513. The disordered stretch occupies residues 1545–1642 (LRRFDSSGNN…NSRDLEPTQK (98 aa)). Composition is skewed to polar residues over residues 1552–1563 (GNNPVFSATVNN) and 1571–1588 (KEVS…SNSK). The segment covering 1613–1627 (SQNTKRSSSSSNTRQ) has biased composition (low complexity).

In terms of assembly, interacts with CTTN/cortactin SH3 domain. Interacts with STRN, STRN4/zinedin and MOB4/phocein; this interactions mediate the association with the STRIPAK core complex and may regulate dendritic spine distribution of the STRIPAK complex in hippocampal neurons. Activation of glutamate receptors weakens the interaction with STRN and STRN4.

Its subcellular location is the cytoplasm. The protein localises to the cell cortex. It localises to the cell projection. The protein resides in the dendritic spine. Its function is as follows. Regulates the dendritic spine distribution of CTTN/cortactin in hippocampal neurons, and thus controls dendritic spinogenesis and dendritic spine maintenance. Associates with the striatin-interacting phosphatase and kinase (STRIPAK) core complex to regulate dendritic spine distribution of the STRIPAK complex in hippocampal neurons. The protein is Cortactin-binding protein 2 (CTTNBP2) of Muntiacus muntjak (Barking deer).